We begin with the raw amino-acid sequence, 195 residues long: Large ribosomal subunit protein bL9 (195 aa).

It belongs to the bacterial ribosomal protein bL9 family.

In terms of biological role, binds to the 23S rRNA. The sequence is that of Large ribosomal subunit protein bL9 from Rhodopseudomonas palustris (strain TIE-1).